Reading from the N-terminus, the 60-residue chain is Regulatory protein DegR (60 aa).

Stabilizes the phosphorylated form of DegU, leading to enhanced production of levansucrase, alkaline protease, and neutral protease. The polypeptide is Regulatory protein DegR (degR) (Bacillus subtilis subsp. natto).